The chain runs to 93 residues: Small ribosomal subunit protein uS15 (93 aa).

The protein belongs to the universal ribosomal protein uS15 family. As to quaternary structure, part of the 30S ribosomal subunit. Forms a bridge to the 50S subunit in the 70S ribosome, contacting the 23S rRNA.

Functionally, one of the primary rRNA binding proteins, it binds directly to 16S rRNA where it helps nucleate assembly of the platform of the 30S subunit by binding and bridging several RNA helices of the 16S rRNA. Its function is as follows. Forms an intersubunit bridge (bridge B4) with the 23S rRNA of the 50S subunit in the ribosome. This chain is Small ribosomal subunit protein uS15, found in Ehrlichia canis (strain Jake).